Reading from the N-terminus, the 321-residue chain is Glucokinase (321 aa).

8–13 (GDVGGT) contacts ATP.

The protein belongs to the bacterial glucokinase family.

Its subcellular location is the cytoplasm. It catalyses the reaction D-glucose + ATP = D-glucose 6-phosphate + ADP + H(+). This chain is Glucokinase, found in Cronobacter sakazakii (strain ATCC BAA-894) (Enterobacter sakazakii).